The sequence spans 122 residues: Large ribosomal subunit protein uL14 (122 aa).

Belongs to the universal ribosomal protein uL14 family. In terms of assembly, part of the 50S ribosomal subunit. Forms a cluster with proteins L3 and L19. In the 70S ribosome, L14 and L19 interact and together make contacts with the 16S rRNA in bridges B5 and B8.

Binds to 23S rRNA. Forms part of two intersubunit bridges in the 70S ribosome. This Shewanella frigidimarina (strain NCIMB 400) protein is Large ribosomal subunit protein uL14.